We begin with the raw amino-acid sequence, 790 residues long: Cadherin-6 (790 aa).

The N-terminal stretch at 1-18 is a signal peptide; sequence MRTYRYFLLLFWVGQPYP. Residues 19–53 constitute a propeptide that is removed on maturation; the sequence is TLSTPLSKRTSGFPAKKRALELSGNSKNELNRSKR. Residue Asn49 is glycosylated (N-linked (GlcNAc...) asparagine). Cadherin domains lie at 54–159, 160–268, 269–383, 384–486, and 487–608; these read SWMW…EPIF, TKEV…PPRF, PQST…PPVF, SKLA…DNAP, and EFAE…LIHP. The Extracellular segment spans residues 54–615; sequence SWMWNQFFLL…IHPTGLSTGA (562 aa). The N-linked (GlcNAc...) asparagine glycan is linked to Asn255. Residues 259–288 form a disordered region; the sequence is TDVNDNPPRFPQSTYQFKTPESSPPGTPIG. Positions 269-279 are enriched in polar residues; it reads PQSTYQFKTPE. Residues Asn399, Asn437, Asn455, and Asn536 are each glycosylated (N-linked (GlcNAc...) asparagine). The chain crosses the membrane as a helical span at residues 616 to 636; that stretch reads LVAILLCIVILLVTVVLFAAL. Residues 637–790 lie on the Cytoplasmic side of the membrane; it reads RRQRKKEPLI…YGGVDSDKDS (154 aa). Phosphoserine occurs at positions 786 and 790.

As to expression, highly expressed in brain, cerebellum, and kidney. Lung, pancreas, and gastric mucosa show a weak expression. Also expressed in certain liver and kidney carcinomas.

Its subcellular location is the cell membrane. In terms of biological role, cadherins are calcium-dependent cell adhesion proteins. They preferentially interact with themselves in a homophilic manner in connecting cells; cadherins may thus contribute to the sorting of heterogeneous cell types. This is Cadherin-6 (CDH6) from Homo sapiens (Human).